The chain runs to 219 residues: Cytochrome c biogenesis ATP-binding export protein CcmA (219 aa).

The 209-residue stretch at 10 to 218 (ISAVNLTCIR…TLDYSYDSAV (209 aa)) folds into the ABC transporter domain. 42 to 49 (GPNGSGKT) provides a ligand contact to ATP.

It belongs to the ABC transporter superfamily. CcmA exporter (TC 3.A.1.107) family. In terms of assembly, the complex is composed of two ATP-binding proteins (CcmA) and two transmembrane proteins (CcmB).

It localises to the cell inner membrane. It catalyses the reaction heme b(in) + ATP + H2O = heme b(out) + ADP + phosphate + H(+). Functionally, part of the ABC transporter complex CcmAB involved in the biogenesis of c-type cytochromes; once thought to export heme, this seems not to be the case, but its exact role is uncertain. Responsible for energy coupling to the transport system. The polypeptide is Cytochrome c biogenesis ATP-binding export protein CcmA (Colwellia psychrerythraea (strain 34H / ATCC BAA-681) (Vibrio psychroerythus)).